Consider the following 204-residue polypeptide: Large ribosomal subunit protein uL4 (204 aa).

The tract at residues 49-75 (TKGRSDVSGGGKKPWRQKGRGGARAGS) is disordered.

The protein belongs to the universal ribosomal protein uL4 family. Part of the 50S ribosomal subunit.

One of the primary rRNA binding proteins, this protein initially binds near the 5'-end of the 23S rRNA. It is important during the early stages of 50S assembly. It makes multiple contacts with different domains of the 23S rRNA in the assembled 50S subunit and ribosome. Its function is as follows. Forms part of the polypeptide exit tunnel. This Campylobacter jejuni subsp. doylei (strain ATCC BAA-1458 / RM4099 / 269.97) protein is Large ribosomal subunit protein uL4.